Consider the following 551-residue polypeptide: L-lactate permease (551 aa).

12 helical membrane passes run 13-33 (NIWL…FALI), 37-57 (LKGY…ALLF), 69-89 (VVYG…AAVF), 131-151 (GAAG…GLGF), 159-179 (LCLI…PILV), 194-214 (MVGR…MAIM), 244-264 (FIGP…CLTL), 306-326 (FLFL…ALFA), 366-386 (FDWF…SIVW), 405-425 (LALP…SNYS), 438-458 (TGSA…FLTG), and 530-550 (IFTC…TWMI).

This sequence belongs to the lactate permease family.

The protein resides in the cell inner membrane. It catalyses the reaction (S)-lactate(in) + H(+)(in) = (S)-lactate(out) + H(+)(out). It carries out the reaction (R)-lactate(in) + H(+)(in) = (R)-lactate(out) + H(+)(out). The catalysed reaction is glycolate(in) + H(+)(in) = glycolate(out) + H(+)(out). Uptake of L-lactate across the membrane. Can also transport D-lactate and glycolate. Seems to be driven by a proton motive force. This Salmonella typhimurium (strain LT2 / SGSC1412 / ATCC 700720) protein is L-lactate permease (lldP).